A 138-amino-acid polypeptide reads, in one-letter code: UPF0201 protein PYRAB09730 (138 aa).

Belongs to the UPF0201 family.

The polypeptide is UPF0201 protein PYRAB09730 (Pyrococcus abyssi (strain GE5 / Orsay)).